The chain runs to 967 residues: Dolichyl-phosphooligosaccharide-protein glycotransferase 1 (967 aa).

Residues 1-21 are Cytoplasmic-facing; sequence MVKTQIKEKKKDEKVTIPLPG. A helical membrane pass occupies residues 22-42; it reads KIKTVLAFLVVLAFAAYGFYI. At 43 to 112 the chain is on the extracellular side; that stretch reads RHLTAGKYFS…ISIFGYNELE (70 aa). The DXD motif 1 signature appears at 53–55; it reads DPD. Position 55 (Asp55) interacts with Mn(2+). The helical transmembrane segment at 113-133 threads the bilayer; that stretch reads AFLLWPPFVGFLSVIGVYLLG. The Cytoplasmic segment spans residues 134 to 135; that stretch reads RK. Residues 136–156 traverse the membrane as a helical segment; that stretch reads VLNEWAGMWGAIILSVLTANF. Residues 157–165 lie on the Extracellular side of the membrane; that stretch reads SRTFSGNAR. Mn(2+) contacts are provided by Arg165 and Asp167. The short motif at 165-167 is the DXD motif 2 element; sequence RGD. The chain crosses the membrane as a helical span at residues 166 to 186; sequence GDGPFMMLFTFSAVLMLYYLT. Topologically, residues 187–193 are cytoplasmic; it reads EENKNKK. Residues 194 to 214 traverse the membrane as a helical segment; that stretch reads IIWGTLFVLLAGISTAAWNGS. Position 215 (Pro215) is a topological domain, extracellular. Residues 216–236 form a helical membrane-spanning segment; the sequence is FGLMVLLGFASFQTIILFIFG. Residues 237–247 are Cytoplasmic-facing; that stretch reads KINELREFIKE. The helical transmembrane segment at 248 to 268 threads the bilayer; the sequence is YYPAYLGILAISYLLTIPGIG. Lys269 is a topological domain (extracellular). The chain crosses the membrane as a helical span at residues 270-290; that stretch reads IGGFVRFAFEVFLGLVFLAIV. Topologically, residues 291–306 are cytoplasmic; sequence MLYGGKYLNYSDKKHR. The helical transmembrane segment at 307–327 threads the bilayer; sequence FAVVAVIVIAGFAGAYIYVGP. Residues 328 to 360 are Extracellular-facing; it reads KLFTLMGGAYQSTQVYETVQELAKTDWGDVKVY. The TIXE motif motif lies at 345 to 348; it reads TVQE. A helical transmembrane segment spans residues 361 to 381; sequence YGVEKPNGIVFFLGLVGAMIV. At 382 to 396 the chain is on the cytoplasmic side; it reads TARYLYKLFKDGRRP. The chain crosses the membrane as a helical span at residues 397–417; sequence HEELFAITFYVMSIYLLWTAA. Residue Arg418 is a topological domain, extracellular. Residue Arg418 coordinates a glycophospholipid. A helical transmembrane segment spans residues 419 to 439; sequence FLFLASYAIALMSGVFAGYVL. Topologically, residues 440–453 are cytoplasmic; that stretch reads ETVEKMKESIPIKA. Residues 454–474 form a helical membrane-spanning segment; the sequence is ALGGVIAIMLLLIPLTHGPLL. At 475-967 the chain is on the extracellular side; that stretch reads AQSAKSMRTT…LEVSASAPHH (493 aa). The tract at residues 511–513 is interacts with target acceptor peptide in protein substrate; the sequence is WWD. The WWDYG motif signature appears at 511 to 515; that stretch reads WWDYG. Tyr516 contributes to the a glycophospholipid binding site. The short motif at 571 to 578 is the DK motif element; the sequence is DWAKFNAI.

It belongs to the STT3 family. Requires Mn(2+) as cofactor. The cofactor is Mg(2+).

It is found in the cell membrane. The catalysed reaction is an archaeal dolichyl phosphooligosaccharide + [protein]-L-asparagine = an archaeal dolichyl phosphate + a glycoprotein with the oligosaccharide chain attached by N-beta-D-glycosyl linkage to a protein L-asparagine.. It participates in protein modification; protein glycosylation. Oligosaccharyl transferase (OST) that catalyzes the initial transfer of a defined glycan (ManNAcXyl(2)GlcAMan(2)GalNAc in P.furiosus) from the lipid carrier dolichol-monophosphate to an asparagine residue within an Asn-X-Ser/Thr consensus motif in nascent polypeptide chains, the first step in protein N-glycosylation. The chain is Dolichyl-phosphooligosaccharide-protein glycotransferase 1 (aglB1) from Pyrococcus furiosus (strain ATCC 43587 / DSM 3638 / JCM 8422 / Vc1).